The chain runs to 84 residues: Cell division topological specificity factor (84 aa).

Belongs to the MinE family.

In terms of biological role, prevents the cell division inhibition by proteins MinC and MinD at internal division sites while permitting inhibition at polar sites. This ensures cell division at the proper site by restricting the formation of a division septum at the midpoint of the long axis of the cell. This chain is Cell division topological specificity factor, found in Burkholderia multivorans (strain ATCC 17616 / 249).